Here is a 545-residue protein sequence, read N- to C-terminus: Ribulokinase (545 aa).

The protein belongs to the ribulokinase family.

The catalysed reaction is D-ribulose + ATP = D-ribulose 5-phosphate + ADP + H(+). It carries out the reaction L-ribulose + ATP = L-ribulose 5-phosphate + ADP + H(+). It participates in carbohydrate degradation; L-arabinose degradation via L-ribulose; D-xylulose 5-phosphate from L-arabinose (bacterial route): step 2/3. The protein is Ribulokinase of Staphylococcus aureus (strain bovine RF122 / ET3-1).